The primary structure comprises 341 residues: Elongation factor Ts (341 aa).

Positions 80 to 83 are involved in Mg(2+) ion dislocation from EF-Tu; the sequence is TDFV.

It belongs to the EF-Ts family.

It is found in the cytoplasm. Its function is as follows. Associates with the EF-Tu.GDP complex and induces the exchange of GDP to GTP. It remains bound to the aminoacyl-tRNA.EF-Tu.GTP complex up to the GTP hydrolysis stage on the ribosome. This chain is Elongation factor Ts, found in Lactobacillus gasseri (strain ATCC 33323 / DSM 20243 / BCRC 14619 / CIP 102991 / JCM 1131 / KCTC 3163 / NCIMB 11718 / NCTC 13722 / AM63).